Consider the following 647-residue polypeptide: Acetyl-coenzyme A synthetase (647 aa).

Residues 190–193, Thr-310, and Asn-334 contribute to the CoA site; that span reads RGGK. Residues 386-388, 410-415, Asp-499, and Arg-514 contribute to the ATP site; these read GEP and DTWWQT. Ser-522 contacts CoA. An ATP-binding site is contributed by Arg-525. Residues Val-536, His-538, and Val-541 each coordinate Mg(2+). Arg-583 serves as a coordination point for CoA. Lys-608 is modified (N6-acetyllysine).

The protein belongs to the ATP-dependent AMP-binding enzyme family. Requires Mg(2+) as cofactor. In terms of processing, acetylated. Deacetylation by the SIR2-homolog deacetylase activates the enzyme.

It carries out the reaction acetate + ATP + CoA = acetyl-CoA + AMP + diphosphate. Functionally, catalyzes the conversion of acetate into acetyl-CoA (AcCoA), an essential intermediate at the junction of anabolic and catabolic pathways. AcsA undergoes a two-step reaction. In the first half reaction, AcsA combines acetate with ATP to form acetyl-adenylate (AcAMP) intermediate. In the second half reaction, it can then transfer the acetyl group from AcAMP to the sulfhydryl group of CoA, forming the product AcCoA. This is Acetyl-coenzyme A synthetase from Xanthomonas oryzae pv. oryzae (strain MAFF 311018).